A 332-amino-acid polypeptide reads, in one-letter code: Glycerol-3-phosphate dehydrogenase [NAD(P)+] (332 aa).

Residues S15, W16, and K110 each coordinate NADPH. Positions 110, 137, and 139 each coordinate sn-glycerol 3-phosphate. A141 contacts NADPH. Sn-glycerol 3-phosphate contacts are provided by K192, D245, S255, R256, and N257. K192 acts as the Proton acceptor in catalysis. R256 provides a ligand contact to NADPH. An NADPH-binding site is contributed by E282.

It belongs to the NAD-dependent glycerol-3-phosphate dehydrogenase family.

The protein resides in the cytoplasm. The enzyme catalyses sn-glycerol 3-phosphate + NAD(+) = dihydroxyacetone phosphate + NADH + H(+). It catalyses the reaction sn-glycerol 3-phosphate + NADP(+) = dihydroxyacetone phosphate + NADPH + H(+). It participates in membrane lipid metabolism; glycerophospholipid metabolism. Functionally, catalyzes the reduction of the glycolytic intermediate dihydroxyacetone phosphate (DHAP) to sn-glycerol 3-phosphate (G3P), the key precursor for phospholipid synthesis. This chain is Glycerol-3-phosphate dehydrogenase [NAD(P)+], found in Coxiella burnetii (strain CbuG_Q212) (Coxiella burnetii (strain Q212)).